A 105-amino-acid polypeptide reads, in one-letter code: Small ribosomal subunit protein uS10 (105 aa).

Belongs to the universal ribosomal protein uS10 family. In terms of assembly, part of the 30S ribosomal subunit.

Functionally, involved in the binding of tRNA to the ribosomes. In Anaplasma marginale (strain Florida), this protein is Small ribosomal subunit protein uS10.